A 423-amino-acid chain; its full sequence is Probable sucrose-phosphatase 1 (423 aa).

It belongs to the sucrose phosphatase family. In terms of assembly, homodimer. It depends on Mg(2+) as a cofactor.

The catalysed reaction is sucrose 6(F)-phosphate + H2O = sucrose + phosphate. Its pathway is glycan biosynthesis; sucrose biosynthesis; sucrose from D-fructose 6-phosphate and UDP-alpha-D-glucose: step 2/2. Its function is as follows. Catalyzes the final step of sucrose synthesis. This is Probable sucrose-phosphatase 1 (SPP1) from Arabidopsis thaliana (Mouse-ear cress).